Reading from the N-terminus, the 234-residue chain is Sugar fermentation stimulation protein homolog (234 aa).

This sequence belongs to the SfsA family.

In Citrobacter koseri (strain ATCC BAA-895 / CDC 4225-83 / SGSC4696), this protein is Sugar fermentation stimulation protein homolog.